Reading from the N-terminus, the 767-residue chain is ATPase family gene 2 protein homolog B (767 aa).

M1 bears the N-acetylmethionine mark. ATP is bound by residues 241–248 (GPPGVGKT) and 507–514 (GPPGCAKT).

The protein belongs to the AAA ATPase family. AFG2 subfamily. In terms of assembly, part of the 55LCC heterohexameric ATPase complex composed at least of AIRIM, AFG2A, AFG2B and CINP. Associates with pre-60S ribosomal particles.

It localises to the cytoplasm. The protein resides in the cytoskeleton. It is found in the spindle. The protein localises to the nucleus. It carries out the reaction ATP + H2O = ADP + phosphate + H(+). In the context of 55LCC heterohexameric ATPase complex, the ATPase activity is stimulated by DNA binding and inhibited in presence of RNA. Functionally, ATP-dependent chaperone part of the 55LCC heterohexameric ATPase complex which is chromatin-associated and promotes replisome proteostasis to maintain replication fork progression and genome stability. Required for replication fork progression, sister chromatid cohesion, and chromosome stability. The ATPase activity is specifically enhanced by replication fork DNA and is coupled to cysteine protease-dependent cleavage of replisome substrates in response to replication fork damage. Uses ATPase activity to process replisome substrates in S-phase, facilitating their proteolytic turnover from chromatin to ensure DNA replication and mitotic fidelity. Plays an essential role in the cytoplasmic maturation steps of pre-60S ribosomal particles by promoting the release of shuttling protein RSL24D1/RLP24 from the pre-ribosomal particles. The sequence is that of ATPase family gene 2 protein homolog B (AFG2B) from Bos taurus (Bovine).